A 1109-amino-acid chain; its full sequence is Pesticidal crystal protein Cry28Aa (1109 aa).

The protein belongs to the delta endotoxin family.

Its function is as follows. Promotes colloidosmotic lysis by binding to the midgut epithelial cells of insects. This chain is Pesticidal crystal protein Cry28Aa (cry28Aa), found in Bacillus thuringiensis subsp. finitimus.